We begin with the raw amino-acid sequence, 311 residues long: Coproporphyrin III ferrochelatase 1 (311 aa).

Residues Y12, R29, 45-46 (RY), S53, and Y124 contribute to the Fe-coproporphyrin III site. H182 and E263 together coordinate Fe(2+).

Belongs to the ferrochelatase family.

The protein localises to the cytoplasm. It carries out the reaction Fe-coproporphyrin III + 2 H(+) = coproporphyrin III + Fe(2+). The protein operates within porphyrin-containing compound metabolism; protoheme biosynthesis. Functionally, involved in coproporphyrin-dependent heme b biosynthesis. Catalyzes the insertion of ferrous iron into coproporphyrin III to form Fe-coproporphyrin III. The sequence is that of Coproporphyrin III ferrochelatase 1 from Bacillus thuringiensis subsp. konkukian (strain 97-27).